We begin with the raw amino-acid sequence, 190 residues long: MPRANEIKKGMVLNYNGKLLIVKDIDIQSPTARGAATLYKMRFSDVRTGLKVEERFKGDDIVDTVTLSRRGVDFSYVDGNEYVFMDKEDYTPYTFTKDQIEEELLFMPEGGMPDMQVLTWDGQLLALELPQTVDLEIVETAPGIKGASASARNKPATLSTGLVIQVPEYLSAGEKIRIHIEERRYMGRAD.

It belongs to the elongation factor P family.

In Salmonella gallinarum (strain 287/91 / NCTC 13346), this protein is Elongation factor P-like protein.